The following is a 95-amino-acid chain: Beta-alanine degradation protein BauB (95 aa).

The region spanning 23 to 90 (WRFAPGAETG…NASAHEVVFV (68 aa)) is the Cupin type-2 domain.

In terms of biological role, involved in the degradation of beta-alanine. This Pseudomonas aeruginosa (strain ATCC 15692 / DSM 22644 / CIP 104116 / JCM 14847 / LMG 12228 / 1C / PRS 101 / PAO1) protein is Beta-alanine degradation protein BauB (bauB).